We begin with the raw amino-acid sequence, 71 residues long: Translation initiation factor IF-1 (71 aa).

One can recognise an S1-like domain in the interval 1–71 (MKEKNIEMQG…SKGRIIFRSR (71 aa)).

The protein belongs to the IF-1 family. In terms of assembly, component of the 30S ribosomal translation pre-initiation complex which assembles on the 30S ribosome in the order IF-2 and IF-3, IF-1 and N-formylmethionyl-tRNA(fMet); mRNA recruitment can occur at any time during PIC assembly.

It is found in the cytoplasm. Its function is as follows. One of the essential components for the initiation of protein synthesis. Stabilizes the binding of IF-2 and IF-3 on the 30S subunit to which N-formylmethionyl-tRNA(fMet) subsequently binds. Helps modulate mRNA selection, yielding the 30S pre-initiation complex (PIC). Upon addition of the 50S ribosomal subunit IF-1, IF-2 and IF-3 are released leaving the mature 70S translation initiation complex. The sequence is that of Translation initiation factor IF-1 from Buchnera aphidicola subsp. Cinara cedri (strain Cc).